A 111-amino-acid polypeptide reads, in one-letter code: Large ribosomal subunit protein eL33x (111 aa).

Belongs to the eukaryotic ribosomal protein eL33 family.

The chain is Large ribosomal subunit protein eL33x (RPL35AD) from Arabidopsis thaliana (Mouse-ear cress).